A 373-amino-acid chain; its full sequence is Protodeoxyviolaceinate monooxygenase (373 aa).

2–20 is a binding site for FAD; that stretch reads KILVIGAGPAGLVFASQLK.

The cofactor is FAD.

It catalyses the reaction protodeoxyviolaceinate + NADH + O2 + H(+) = protoviolaceinate + NAD(+) + H2O. The catalysed reaction is protodeoxyviolaceinate + NADPH + O2 + H(+) = protoviolaceinate + NADP(+) + H2O. Its pathway is pigment biosynthesis; violacein biosynthesis. Catalyzes the oxygenation of the 6-position of protodeoxyviolaceinate to form proviolacein. The polypeptide is Protodeoxyviolaceinate monooxygenase (vioD) (Chromobacterium violaceum (strain ATCC 12472 / DSM 30191 / JCM 1249 / CCUG 213 / NBRC 12614 / NCIMB 9131 / NCTC 9757 / MK)).